A 355-amino-acid chain; its full sequence is 45 kDa calcium-binding protein (355 aa).

An N-terminal signal peptide occupies residues 1–29 (MASRQGPLCGLAPCCLWLLGVILLMNASA). An N-linked (GlcNAc...) asparagine glycan is attached at asparagine 26. EF-hand domains are found at residues 91 to 126 (KSRRKLMVIFSKVDLNTDRRISAKEMQKWIMQKTAE) and 130 to 165 (EAVAESRAHFRAVDPDGDGHVSWDEYKVKFLATKGH). The residue at position 92 (serine 92) is a Phosphoserine. Ca(2+)-binding residues include aspartate 104, asparagine 106, aspartate 108, arginine 110, glutamate 115, aspartate 143, aspartate 145, aspartate 147, histidine 149, and glutamate 154. Phosphothreonine is present on residues threonine 186 and threonine 210. EF-hand domains follow at residues 226-261 (MLQFMVKEIIRDLDQDGDKKLSLSEFISLPVGTVEN), 271-306 (WVRDRKREFEELIDANHDGIVTMAELEDYMDPMNEF), and 307-342 (SALNEAKQMIAIADENQNHYLEPEEVLKYSEFFTGS). Ca(2+)-binding residues include aspartate 239, aspartate 241, aspartate 243, lysine 245, and glutamate 250. The residue at position 258 (threonine 258) is a Phosphothreonine. 3 residues coordinate Ca(2+): aspartate 284, asparagine 286, and aspartate 288. Residue threonine 292 is modified to Phosphothreonine. The Ca(2+) site is built by glutamate 295, aspartate 320, asparagine 322, asparagine 324, tyrosine 326, and glutamate 331. The necessary for intracellular retention in Golgi apparatus lumen stretch occupies residues 302-355 (PMNEFSALNEAKQMIAIADENQNHYLEPEEVLKYSEFFTGSKLVDYARSVHEEF).

It belongs to the CREC family.

Its subcellular location is the golgi apparatus lumen. In terms of biological role, may regulate calcium-dependent activities in the endoplasmic reticulum lumen or post-ER compartment. This is 45 kDa calcium-binding protein (SDF4) from Capra hircus (Goat).